Reading from the N-terminus, the 440-residue chain is GTPase Der (440 aa).

EngA-type G domains follow at residues 4-168 and 177-352; these read PIVA…NPED and IKVA…NQNA. GTP is bound by residues 10-17, 57-61, 120-123, 183-190, 230-234, and 295-298; these read GRPNVGKS, DTGGI, NKVD, GKPNVGKS, DTAGI, and NKWD. The KH-like domain maps to 353–437; sequence MRIPTGALNE…PIRFILREKT (85 aa).

The protein belongs to the TRAFAC class TrmE-Era-EngA-EngB-Septin-like GTPase superfamily. EngA (Der) GTPase family. As to quaternary structure, associates with the 50S ribosomal subunit.

Functionally, GTPase that plays an essential role in the late steps of ribosome biogenesis. The chain is GTPase Der from Alkaliphilus oremlandii (strain OhILAs) (Clostridium oremlandii (strain OhILAs)).